The primary structure comprises 309 residues: Partitioning defective protein 6 (309 aa).

Residues 14–96 enclose the PB1 domain; sequence TLQVKSKFDS…PLLRLLIQRR (83 aa). Positions 132-149 constitute a Pseudo-CRIB domain; sequence ISNPEDFRQVSAIIDVDI. Residues 156-249 enclose the PDZ domain; sequence RVRLCKHGQE…NLIITVKPAN (94 aa). Residues 249–270 are compositionally biased toward polar residues; the sequence is NQRNTLSRGPSQQGTPNASEMS. The disordered stretch occupies residues 249–309; it reads NQRNTLSRGP…DANDSDSGED (61 aa).

It belongs to the PAR6 family. In terms of assembly, interacts with par-3, required for its peripheral localization, and with cdc-42, required for the activation of a par-3/par-6/pkc-3 complex. As to expression, colocalized with par-3 at all stages in early embryos, at the anterior cortex of the embryo. Patchy expression observed at the periphery after completion of meiosis I and in meiosis II, which on completion of metaphase II, is restricted to the anterior 85% of embryo length; this decreases to 55% in embryos between prophase and telophase of the first mitosis. During the first cleavage, expression is detected in the advancing furrow. Along with pkc-3, is unable to associate with the apical cortex of cells that lack par-3. Transiently coexpressed and colocalized with par-3 and pkc-3, asymmetrically in the developing somatic gonad, including the spermathecal precursor cells of L4 larvae.

The protein resides in the cytoplasm. It localises to the cell membrane. The protein localises to the cell junction. Its subcellular location is the tight junction. Necessary for apicobasal and anterior-posterior asymmetries associated with cell adhesion and gastrulation during the first few cell cycles of embryogenesis. Required for localizing/ maintaining par-3 at the cell periphery. Regulates mes-1 expression and/or localization pattern during early embryogenesis. Acts together with par-3 and pkc-3 in maintaining epithelial cell polarity in the distal spermatheca. Plays a role in endosome and Golgi body positioning. In Caenorhabditis elegans, this protein is Partitioning defective protein 6.